The following is a 1096-amino-acid chain: Protein spire (1096 aa).

Disordered stretches follow at residues 1-79 and 184-211; these read MTEH…GNGT and VESQ…TSSV. Polar residues predominate over residues 37 to 51; that stretch reads LSTSPDSANGDAQQA. The segment covering 53–65 has biased composition (basic residues); sequence THTHIISHTHSKG. Low complexity-rich tracts occupy residues 66–77 and 189–201; these read AAKTQTQTQNGN and QEAS…QKQP. Positions 111–366 constitute a KIND domain; the sequence is VTLNNILDSF…RALATETIEL (256 aa). A coiled-coil region spans residues 315–340; the sequence is KRWDDEAEEERNDTKELEHIIETCRN. WH2 domains lie at 436 to 454 and 500 to 517; these read PYEI…LRKV and PREQ…LKQI. 3 disordered regions span residues 560–588, 614–656, and 693–762; these read DDSS…AHLA, QECQ…PSFT, and QSNL…LGPW. The segment covering 574–585 has biased composition (basic residues); that stretch reads HQHHQQHQPHHA. Low complexity-rich tracts occupy residues 633–645 and 714–725; these read APRQ…QAQA and DAGSQSQSGASS. The span at 737–754 shows a compositional bias: basic and acidic residues; that stretch reads EGDHSQTTDGPPRLDEAH. Positions 780 to 800 are spir-box; sequence LSVTLAEIVHIRSVMTKAELE. Residues 874–894 show a composition bias toward low complexity; that stretch reads PASSSTPSPSHHAHQAHSSST. Disordered stretches follow at residues 874 to 899, 912 to 958, and 997 to 1021; these read PASS…NIMD, RSES…APGH, and RSME…SSTL. Polar residues predominate over residues 921 to 941; it reads STVGSAPSSPKHQRSNMSTPG.

This sequence belongs to the spire family. In terms of assembly, interacts with bsk, Rho1, Rac1, Cdc42 and wash. Interacts with capu. Phosphorylated by Jnk kinase (bsk).

Its subcellular location is the cytoplasm. It is found in the cytoskeleton. It localises to the perinuclear region. The protein resides in the cell membrane. The protein localises to the cytoplasmic vesicle membrane. Acts as an actin nucleation factor, remains associated with the slow-growing pointed end of the new filament. Promotes dissociation of capu from the barbed end of actin filaments. Involved in intracellular vesicle transport along actin fibers, providing a novel link between actin cytoskeleton dynamics and intracellular transport. Required for localization of determinants within the developing oocyte to the posterior pole and to the dorsal anterior corner. Links Rho family signaling and Jnk function to the actin cytoskeleton. The polypeptide is Protein spire (Drosophila pseudoobscura pseudoobscura (Fruit fly)).